A 513-amino-acid polypeptide reads, in one-letter code: Glutamate--tRNA ligase 2 (513 aa).

A 'HIGH' region motif is present at residues 11 to 21 (PSPSGFLHIGS). A 'KMSKS' region motif is present at residues 240 to 244 (KLSKR). Lys243 contacts ATP.

The protein belongs to the class-I aminoacyl-tRNA synthetase family. Glutamate--tRNA ligase type 1 subfamily. Monomer.

It is found in the cytoplasm. It carries out the reaction tRNA(Glu) + L-glutamate + ATP = L-glutamyl-tRNA(Glu) + AMP + diphosphate. Functionally, catalyzes the attachment of glutamate to tRNA(Glu) in a two-step reaction: glutamate is first activated by ATP to form Glu-AMP and then transferred to the acceptor end of tRNA(Glu). The protein is Glutamate--tRNA ligase 2 of Rickettsia massiliae (strain Mtu5).